A 213-amino-acid chain; its full sequence is Chloramphenicol acetyltransferase 2 (213 aa).

His-189 functions as the Proton acceptor in the catalytic mechanism.

This sequence belongs to the chloramphenicol acetyltransferase family. In terms of assembly, homotrimer.

It carries out the reaction chloramphenicol + acetyl-CoA = chloramphenicol 3-acetate + CoA. Its function is as follows. This enzyme is an effector of chloramphenicol resistance in bacteria. In Escherichia coli, this protein is Chloramphenicol acetyltransferase 2 (cmlA).